The following is a 1081-amino-acid chain: Dyslexia-associated protein KIAA0319 homolog (1081 aa).

Positions 1-22 (MVSPPGVLSSLLLLAAMAGGSS) are cleaved as a signal peptide. The 77-residue stretch at 23-99 (QQCSEGRTYS…PRTTGPIRSY (77 aa)) folds into the MANSC domain. At 23-964 (QQCSEGRTYS…WDGESNCEWS (942 aa)) the chain is on the extracellular side. 3 disordered regions span residues 141-160 (LPFL…SDDY), 168-216 (LQPS…DLTP), and 228-298 (NEST…TTVE). 3 stretches are compositionally biased toward polar residues: residues 197–209 (ASAT…ASTE), 228–253 (NEST…TASP), and 283–298 (HNPS…TTVE). 5 consecutive PKD domains span residues 345 to 436 (AVSA…VMPA), 444 to 533 (VAIV…IRGS), 539 to 629 (VANA…VQAE), 630 to 723 (NNQA…VKKE), and 729 to 820 (RAQA…VLPD). N-linked (GlcNAc...) asparagine glycans are attached at residues asparagine 430 and asparagine 522. The helical transmembrane segment at 965–985 (VFYVAALALTLTVLTGAVTWV) threads the bilayer. The Cytoplasmic portion of the chain corresponds to 986–1081 (CICCCRRRKR…VSFGYYSKDR (96 aa)). The Endocytosis signal motif lies at 1004-1007 (YTIL).

Homodimer. Interacts with AP2M1; required for clathrin-mediated endocytosis. In terms of processing, N-glycosylated. Post-translationally, O-glycosylated. Shedding of the extracellular domain and intramembrane cleavage produce several proteolytic products. The intramembrane cleavage releases a soluble cytoplasmic polypeptide that translocates to the nucleolus. As to expression, highly expressed during development in ventricular zone, intermediate zone, cortical plate, striatum, hippocampus, and brain stem.

It is found in the cell membrane. It localises to the early endosome membrane. Its function is as follows. Involved in neuronal migration during development of the cerebral neocortex. May function in a cell autonomous and a non-cell autonomous manner and play a role in appropriate adhesion between migrating neurons and radial glial fibers. May also regulate growth and differentiation of dendrites. The chain is Dyslexia-associated protein KIAA0319 homolog from Rattus norvegicus (Rat).